A 426-amino-acid polypeptide reads, in one-letter code: UPF0597 protein CLI_1810 (426 aa).

The protein belongs to the UPF0597 family.

The chain is UPF0597 protein CLI_1810 from Clostridium botulinum (strain Langeland / NCTC 10281 / Type F).